Reading from the N-terminus, the 289-residue chain is tRNA pseudouridine synthase B (289 aa).

Asp38 acts as the Nucleophile in catalysis.

The protein belongs to the pseudouridine synthase TruB family. Type 1 subfamily.

The enzyme catalyses uridine(55) in tRNA = pseudouridine(55) in tRNA. Functionally, responsible for synthesis of pseudouridine from uracil-55 in the psi GC loop of transfer RNAs. The protein is tRNA pseudouridine synthase B of Clostridium novyi (strain NT).